A 204-amino-acid chain; its full sequence is Lysozyme G (204 aa).

The N-terminal stretch at methionine 1 to serine 19 is a signal peptide. 2 cysteine pairs are disulfide-bonded: cysteine 23/cysteine 79 and cysteine 37/cysteine 48. Active-site residues include glutamate 92 and aspartate 105.

This sequence belongs to the glycosyl hydrolase 23 family.

Its subcellular location is the secreted. The enzyme catalyses Hydrolysis of (1-&gt;4)-beta-linkages between N-acetylmuramic acid and N-acetyl-D-glucosamine residues in a peptidoglycan and between N-acetyl-D-glucosamine residues in chitodextrins.. Its function is as follows. Has bacteriolytic activity against M.luteus. In Dromaius novaehollandiae (Emu), this protein is Lysozyme G.